The following is a 263-amino-acid chain: Endonuclease 8 (263 aa).

P2 (schiff-base intermediate with DNA) is an active-site residue. The active-site Proton donor is the E3. K53 acts as the Proton donor; for beta-elimination activity in catalysis. Q70, R125, and N169 together coordinate DNA. An FPG-type zinc finger spans residues 229–263 (KVFHRDGEPCERCGGIIEKTTLSSRPFYWCPGCQH). Catalysis depends on R253, which acts as the Proton donor; for delta-elimination activity.

The protein belongs to the FPG family. Zn(2+) serves as cofactor.

The enzyme catalyses 2'-deoxyribonucleotide-(2'-deoxyribose 5'-phosphate)-2'-deoxyribonucleotide-DNA = a 3'-end 2'-deoxyribonucleotide-(2,3-dehydro-2,3-deoxyribose 5'-phosphate)-DNA + a 5'-end 5'-phospho-2'-deoxyribonucleoside-DNA + H(+). Involved in base excision repair of DNA damaged by oxidation or by mutagenic agents. Acts as a DNA glycosylase that recognizes and removes damaged bases. Has a preference for oxidized pyrimidines, such as thymine glycol, 5,6-dihydrouracil and 5,6-dihydrothymine. Has AP (apurinic/apyrimidinic) lyase activity and introduces nicks in the DNA strand. Cleaves the DNA backbone by beta-delta elimination to generate a single-strand break at the site of the removed base with both 3'- and 5'-phosphates. The chain is Endonuclease 8 from Escherichia coli O6:K15:H31 (strain 536 / UPEC).